The primary structure comprises 457 residues: Argininosuccinate lyase (457 aa).

This sequence belongs to the lyase 1 family. Argininosuccinate lyase subfamily.

It localises to the cytoplasm. It carries out the reaction 2-(N(omega)-L-arginino)succinate = fumarate + L-arginine. Its pathway is amino-acid biosynthesis; L-arginine biosynthesis; L-arginine from L-ornithine and carbamoyl phosphate: step 3/3. This is Argininosuccinate lyase from Shigella dysenteriae serotype 1 (strain Sd197).